The primary structure comprises 195 residues: MRTGIFGGSFDPPHNGHLAMCLFARELLRLDRLIVSVSRNPFKTGAHASDDDRVSMARLLTDEVNAAGRFAESSSWELETDGPSYTVDLLRHIADLYPDDELLLLVGEDSYRQMGQWKAASEIPRLCQIVYFGREGYENCQHDAEALHLPVRRIDFDMPVSATEIRRLVAAGQPVSQLVPPSINHYIAEHGLYRS.

The protein belongs to the NadD family.

The catalysed reaction is nicotinate beta-D-ribonucleotide + ATP + H(+) = deamido-NAD(+) + diphosphate. It participates in cofactor biosynthesis; NAD(+) biosynthesis; deamido-NAD(+) from nicotinate D-ribonucleotide: step 1/1. Catalyzes the reversible adenylation of nicotinate mononucleotide (NaMN) to nicotinic acid adenine dinucleotide (NaAD). This Chlorobaculum parvum (strain DSM 263 / NCIMB 8327) (Chlorobium vibrioforme subsp. thiosulfatophilum) protein is Probable nicotinate-nucleotide adenylyltransferase.